The following is a 352-amino-acid chain: Fatty acid desaturase (352 aa).

The next 2 helical transmembrane spans lie at 28-48 (SLIQ…LAYL) and 55-75 (LLTL…FIIF). Residues 76–80 (HDCCH) carry the Histidine box-1 motif. Residues 89–109 (YNHILGFLTGVLTLFPYLQWQ) form a helical membrane-spanning segment. The Histidine box-2 signature appears at 112 to 116 (HSIHH). 3 helical membrane-spanning segments follow: residues 151–171 (LYRN…LITN), 186–206 (TYLT…IFGW), and 209–229 (FLLV…WLFY). The Histidine box-3 signature appears at 274–278 (HHVHH).

The protein belongs to the fatty acid desaturase type 1 family.

It is found in the cell membrane. It functions in the pathway lipid metabolism; fatty acid metabolism. Functionally, catalyzes the introduction of a cis-double bond at the delta(5) position of existing saturated fatty acids attached to membrane phospholipids. It is not strictly specific for palmitic acid (C16) but can also accept C14 as well as C18 species to yield unsaturated fatty acids. The polypeptide is Fatty acid desaturase (des) (Bacillus subtilis (strain 168)).